A 274-amino-acid chain; its full sequence is Ribosomal RNA small subunit methyltransferase A (274 aa).

Histidine 15, leucine 17, glycine 42, glutamate 64, aspartate 89, and asparagine 108 together coordinate S-adenosyl-L-methionine.

Belongs to the class I-like SAM-binding methyltransferase superfamily. rRNA adenine N(6)-methyltransferase family. RsmA subfamily.

The protein resides in the cytoplasm. The catalysed reaction is adenosine(1518)/adenosine(1519) in 16S rRNA + 4 S-adenosyl-L-methionine = N(6)-dimethyladenosine(1518)/N(6)-dimethyladenosine(1519) in 16S rRNA + 4 S-adenosyl-L-homocysteine + 4 H(+). In terms of biological role, specifically dimethylates two adjacent adenosines (A1518 and A1519) in the loop of a conserved hairpin near the 3'-end of 16S rRNA in the 30S particle. May play a critical role in biogenesis of 30S subunits. This is Ribosomal RNA small subunit methyltransferase A from Prochlorococcus marinus (strain MIT 9301).